We begin with the raw amino-acid sequence, 286 residues long: 2,3,4,5-tetrahydropyridine-2,6-dicarboxylate N-succinyltransferase (286 aa).

Positions 109 and 146 each coordinate substrate.

The protein belongs to the transferase hexapeptide repeat family. Homotrimer.

The protein localises to the cytoplasm. The enzyme catalyses (S)-2,3,4,5-tetrahydrodipicolinate + succinyl-CoA + H2O = (S)-2-succinylamino-6-oxoheptanedioate + CoA. Its pathway is amino-acid biosynthesis; L-lysine biosynthesis via DAP pathway; LL-2,6-diaminopimelate from (S)-tetrahydrodipicolinate (succinylase route): step 1/3. The chain is 2,3,4,5-tetrahydropyridine-2,6-dicarboxylate N-succinyltransferase from Bartonella tribocorum (strain CIP 105476 / IBS 506).